A 384-amino-acid polypeptide reads, in one-letter code: UDP-N-acetylglucosamine--N-acetylmuramyl-(pentapeptide) pyrophosphoryl-undecaprenol N-acetylglucosamine transferase (384 aa).

Residues 17–19 (TGG), Asn-131, Arg-172, Ser-200, and Gln-301 contribute to the UDP-N-acetyl-alpha-D-glucosamine site.

The protein belongs to the glycosyltransferase 28 family. MurG subfamily.

It is found in the cell inner membrane. The enzyme catalyses di-trans,octa-cis-undecaprenyl diphospho-N-acetyl-alpha-D-muramoyl-L-alanyl-D-glutamyl-meso-2,6-diaminopimeloyl-D-alanyl-D-alanine + UDP-N-acetyl-alpha-D-glucosamine = di-trans,octa-cis-undecaprenyl diphospho-[N-acetyl-alpha-D-glucosaminyl-(1-&gt;4)]-N-acetyl-alpha-D-muramoyl-L-alanyl-D-glutamyl-meso-2,6-diaminopimeloyl-D-alanyl-D-alanine + UDP + H(+). The protein operates within cell wall biogenesis; peptidoglycan biosynthesis. Its function is as follows. Cell wall formation. Catalyzes the transfer of a GlcNAc subunit on undecaprenyl-pyrophosphoryl-MurNAc-pentapeptide (lipid intermediate I) to form undecaprenyl-pyrophosphoryl-MurNAc-(pentapeptide)GlcNAc (lipid intermediate II). The chain is UDP-N-acetylglucosamine--N-acetylmuramyl-(pentapeptide) pyrophosphoryl-undecaprenol N-acetylglucosamine transferase from Granulibacter bethesdensis (strain ATCC BAA-1260 / CGDNIH1).